A 501-amino-acid polypeptide reads, in one-letter code: G protein-activated inward rectifier potassium channel 1 (501 aa).

The disordered stretch occupies residues 1-40 (MSALRRKFGDDYQVVTTSSSGSGLQPQGPGQDPQQQLVPK). At 1–80 (MSALRRKFGD…LFTTLVDLKW (80 aa)) the chain is on the cytoplasmic side. Positions 18 to 38 (SSSGSGLQPQGPGQDPQQQLV) are enriched in low complexity. The helical transmembrane segment at 81 to 105 (RWNLFIFILTYTVAWLFMASMWWVI) threads the bilayer. At 106–129 (AYTRGDLNKAHVGNYTPCVANVYN) the chain is on the extracellular side. N-linked (GlcNAc...) asparagine glycosylation is present at N119. Residues 130-141 (FPSAFLFFIETE) constitute an intramembrane region (helical; Pore-forming). Positions 142 to 148 (ATIGYGY) form an intramembrane region, pore-forming. Positions 143–148 (TIGYGY) match the Selectivity filter motif. Residues 149 to 157 (RYITDKCPE) lie on the Extracellular side of the membrane. Residues 158–179 (GIILFLFQSILGSIVDAFLIGC) form a helical membrane-spanning segment. The Cytoplasmic portion of the chain corresponds to 180–501 (MFIKMSQPKK…LRKMNSDRFT (322 aa)). Residues 182–209 (IKMSQPKKRAETLMFSEHAVISMRDGKL) form a polyphosphoinositide (PIP2)-binding region. A phosphoserine mark is found at S385 and S424.

This sequence belongs to the inward rectifier-type potassium channel (TC 1.A.2.1) family. KCNJ3 subfamily. In terms of assembly, associates with KCNJ5/GIRK4 or KCNJ6/GIRK2 to form a G-protein activated heteromultimer pore-forming unit. The resulting inward current is much larger. Associates with KCNJ9/GIRK3 to form a G-protein activated heteromultimer pore-forming unit.

The protein resides in the membrane. The catalysed reaction is K(+)(in) = K(+)(out). Its activity is regulated as follows. Heteromultimer composed of KCNJ3/GIRK1 and KCNJ5/GIRK4 is activated by phosphatidylinositol 4,5 biphosphate (PtdIns(4,5)P2). In terms of biological role, inward rectifier potassium channels are characterized by a greater tendency to allow potassium to flow into the cell rather than out of it. Their voltage dependence is regulated by the concentration of extracellular potassium; as external potassium is raised, the voltage range of the channel opening shifts to more positive voltages. The inward rectification is mainly due to the blockage of outward current by internal magnesium. This potassium channel is controlled by G proteins. This receptor plays a crucial role in regulating the heartbeat. In Homo sapiens (Human), this protein is G protein-activated inward rectifier potassium channel 1 (KCNJ3).